Here is a 205-residue protein sequence, read N- to C-terminus: COP9 signalosome complex subunit 7 (205 aa).

The 135-residue stretch at 1–135 folds into the PCI domain; it reads MEEKISQAID…QTLHVSWALE (135 aa). The residue at position 183 (Ser-183) is a Phosphoserine.

Belongs to the CSN7/EIF3M family. CSN7 subfamily. In terms of assembly, component of the COP9 signalosome (CSN) complex.

Its function is as follows. Component of the COP9 signalosome (CSN) complex that acts as an regulator of the ubiquitin (Ubl) conjugation pathway by mediating the deneddylation of the cullin subunit of SCF-type E3 ubiquitin-protein ligase complexes. This Schizosaccharomyces pombe (strain 972 / ATCC 24843) (Fission yeast) protein is COP9 signalosome complex subunit 7 (csn71).